Reading from the N-terminus, the 252-residue chain is Triosephosphate isomerase (252 aa).

Position 10–12 (10–12) interacts with substrate; it reads NWK. Histidine 96 (electrophile) is an active-site residue. Glutamate 168 (proton acceptor) is an active-site residue. Substrate is bound by residues glycine 174, serine 214, and 235–236; that span reads GG.

Belongs to the triosephosphate isomerase family. As to quaternary structure, homodimer.

It is found in the cytoplasm. The enzyme catalyses D-glyceraldehyde 3-phosphate = dihydroxyacetone phosphate. Its pathway is carbohydrate biosynthesis; gluconeogenesis. The protein operates within carbohydrate degradation; glycolysis; D-glyceraldehyde 3-phosphate from glycerone phosphate: step 1/1. Its function is as follows. Involved in the gluconeogenesis. Catalyzes stereospecifically the conversion of dihydroxyacetone phosphate (DHAP) to D-glyceraldehyde-3-phosphate (G3P). This chain is Triosephosphate isomerase, found in Lactobacillus helveticus (strain DPC 4571).